We begin with the raw amino-acid sequence, 208 residues long: Ribosomal RNA large subunit methyltransferase E (208 aa).

Glycine 63, tryptophan 65, aspartate 83, aspartate 99, and aspartate 124 together coordinate S-adenosyl-L-methionine. The active-site Proton acceptor is lysine 164.

This sequence belongs to the class I-like SAM-binding methyltransferase superfamily. RNA methyltransferase RlmE family.

The protein localises to the cytoplasm. The catalysed reaction is uridine(2552) in 23S rRNA + S-adenosyl-L-methionine = 2'-O-methyluridine(2552) in 23S rRNA + S-adenosyl-L-homocysteine + H(+). In terms of biological role, specifically methylates the uridine in position 2552 of 23S rRNA at the 2'-O position of the ribose in the fully assembled 50S ribosomal subunit. The polypeptide is Ribosomal RNA large subunit methyltransferase E (Enterobacter sp. (strain 638)).